Here is a 230-residue protein sequence, read N- to C-terminus: Large ribosomal subunit protein uL1 (230 aa).

This sequence belongs to the universal ribosomal protein uL1 family. In terms of assembly, part of the 50S ribosomal subunit.

Functionally, binds directly to 23S rRNA. The L1 stalk is quite mobile in the ribosome, and is involved in E site tRNA release. In terms of biological role, protein L1 is also a translational repressor protein, it controls the translation of the L11 operon by binding to its mRNA. In Sulfurimonas denitrificans (strain ATCC 33889 / DSM 1251) (Thiomicrospira denitrificans (strain ATCC 33889 / DSM 1251)), this protein is Large ribosomal subunit protein uL1.